The primary structure comprises 971 residues: Unconventional myosin-XIX (971 aa).

Residues 1–25 form a disordered region; the sequence is MSRPLSKNTEREPKQINGHQNNLSN. One can recognise a Myosin motor domain in the interval 48–755; that stretch reads HLYDDLTKVN…MVELLEERRL (708 aa). 145-152 lines the ATP pocket; sequence GESGAGKT. Positions 611 to 633 are actin-binding; that stretch reads LESLMQILHSTTPHYIRCIKPNV. 2 IQ domains span residues 758–787 and 780–809; these read ISSK…ATTI and QSKA…AATV. The myMOMA region stretch occupies residues 826 to 971; sequence AAELDDSTED…FNEILLEKTV (146 aa).

Belongs to the TRAFAC class myosin-kinesin ATPase superfamily. Myosin family. Myosin is a hexamer of 2 heavy chains and 4 light chains.

Its subcellular location is the mitochondrion outer membrane. The protein resides in the cytoplasm. It localises to the cytoskeleton. In terms of biological role, actin-based motor molecule with ATPase activity that localizes to the mitochondrion outer membrane. Motor protein that moves towards the plus-end of actin filaments. Required for mitochondrial inheritance during mitosis. May be involved in mitochondrial transport or positioning. This chain is Unconventional myosin-XIX, found in Xenopus laevis (African clawed frog).